Here is a 241-residue protein sequence, read N- to C-terminus: Enolase-phosphatase E1 (241 aa).

Residues D9 and E11 each contribute to the Mg(2+) site. Substrate is bound by residues S133–S134 and K172. D198 contributes to the Mg(2+) binding site.

It belongs to the HAD-like hydrolase superfamily. MasA/MtnC family. As to quaternary structure, monomer. Requires Mg(2+) as cofactor.

It localises to the cytoplasm. Its subcellular location is the nucleus. The catalysed reaction is 5-methylsulfanyl-2,3-dioxopentyl phosphate + H2O = 1,2-dihydroxy-5-(methylsulfanyl)pent-1-en-3-one + phosphate. It functions in the pathway amino-acid biosynthesis; L-methionine biosynthesis via salvage pathway; L-methionine from S-methyl-5-thio-alpha-D-ribose 1-phosphate: step 3/6. The protein operates within amino-acid biosynthesis; L-methionine biosynthesis via salvage pathway; L-methionine from S-methyl-5-thio-alpha-D-ribose 1-phosphate: step 4/6. Functionally, bifunctional enzyme that catalyzes the enolization of 2,3-diketo-5-methylthiopentyl-1-phosphate (DK-MTP-1-P) into the intermediate 2-hydroxy-3-keto-5-methylthiopentenyl-1-phosphate (HK-MTPenyl-1-P), which is then dephosphorylated to form the acireductone 1,2-dihydroxy-3-keto-5-methylthiopentene (DHK-MTPene). The polypeptide is Enolase-phosphatase E1 (Scheffersomyces stipitis (strain ATCC 58785 / CBS 6054 / NBRC 10063 / NRRL Y-11545) (Yeast)).